We begin with the raw amino-acid sequence, 314 residues long: Melanoma-associated antigen 6 (314 aa).

Positions 1–20 (MPLEQRSQHCKPEEGLEARG) are enriched in basic and acidic residues. Residues 1–99 (MPLEQRSQHC…QEEEGPSTFP (99 aa)) are disordered. Low complexity predominate over residues 21–44 (EALGLVGAQAPATEEQEAASSSST). Polar residues predominate over residues 65–87 (PQGASSLPTTMNYPLWSQSYEDS). Positions 109–308 (LSRKVAKLVH…ISYPLLHEWA (200 aa)) constitute an MAGE domain.

Interacts with TRIM28. Post-translationally, ubiquitinated by the DCX(DCAF12) complex specifically recognizes the diglutamate (Glu-Glu) at the C-terminus, leading to its degradation. Expressed in many tumors of several types, such as melanoma, head and neck squamous cell carcinoma, lung carcinoma and breast carcinoma, but not in normal tissues except for testes.

Its function is as follows. Activator of ubiquitin ligase activity of RING-type zinc finger-containing E3 ubiquitin-protein ligases that acts as a repressor of autophagy. May enhance ubiquitin ligase activity of TRIM28 and stimulate p53/TP53 ubiquitination by TRIM28. Proposed to act through recruitment and/or stabilization of the Ubl-conjugating enzyme (E2) at the E3:substrate complex. May play a role in tumor transformation or aspects of tumor progression. In vitro promotes cell viability in melanoma cell lines. This chain is Melanoma-associated antigen 6, found in Homo sapiens (Human).